A 551-amino-acid polypeptide reads, in one-letter code: Palatinase (551 aa).

The active-site Nucleophile is the D201. E243 acts as the Proton donor in catalysis.

It belongs to the glycosyl hydrolase 13 family.

It catalyses the reaction 6-O-alpha-D-glucopyranosyl-D-fructose + H2O = alpha-D-glucose + D-fructose. It participates in glycan degradation; palatinose degradation. Catalyzes the hydrolysis of palatinose. Shows a strict specificity toward palatinose, and cannot release glucose from the disaccharides sucrose, maltose, trehalose and melibiose. Involved in the degradation of palatinose, a sucrose isomer that is formed as a reserve material under conditions of excess carbon availability, sequestered in a form unavailable to competitors such as fungi or the host plant, and whose consumption appears to be postponed until the preferentially metabolized carbon source (e.g. sucrose) is depleted. The sequence is that of Palatinase from Erwinia rhapontici (Pectobacterium rhapontici).